The following is a 160-amino-acid chain: SUMO-conjugating enzyme SCE1 (160 aa).

Alanine 2 carries the post-translational modification N-acetylalanine. A UBC core domain is found at 5-158 (IARGRLAEER…VKLQSKQYPA (154 aa)). Cysteine 94 serves as the catalytic Glycyl thioester intermediate.

This sequence belongs to the ubiquitin-conjugating enzyme family. In terms of assembly, interacts with SIZ1 (via PHD domain) and MMS21. Interacts with TCP14 and TCP15. Interacts with KIN10.

It participates in protein modification; protein sumoylation. SUMO-conjugating enzyme that accepts the SUMO proteins from the E1 SUMO-activating heterodimer SAE1/SAE2 and catalyzes its covalent attachment to other proteins with the E3 SUMO ligases SIZ1 and MMS21. Associates with SIZ1 for sumoylation of the transcription factor GTE3. This Arabidopsis thaliana (Mouse-ear cress) protein is SUMO-conjugating enzyme SCE1 (SCE1).